The sequence spans 565 residues: Polycomb protein EED (565 aa).

WD repeat units lie at residues 89 to 133 (DDGN…LYRT), 136 to 176 (GHGG…EKQP), 185 to 224 (GHSY…NEHM), and 240 to 278 (IHNN…SDDP). Residues 417 to 488 (VKKAPGAAGS…SASPDPDSPF (72 aa)) are disordered. Residues 429–450 (GTAANGGHNNNNNNNNNNNNNN) show a composition bias toward low complexity. A compositionally biased stretch (polar residues) spans 451 to 468 (HETGSQRSFSATNNLSNS). Residues 519–559 (IDGAFVGRQVGWSPEGEWCVVVGNGNRALIYQRWGKERGLG) form a WD 5 repeat.

It belongs to the WD repeat ESC family. As to quaternary structure, component of the polycomb repressive complex 2 (PRC2) that consists of four core subunits icluding EZH2, EED, SUZ12, and RBBP4, among which EZH2 is the catalytic subunit and which minimally requires EED and SUZ12 for catalysis.

It localises to the nucleus. Component of the of the Polycomb Repressive Complex 2 (PRC2), a histone H3 lysine methyltransferase responsible for generating mono-, di-, and tri-methylation on Lys27 (H3K27me1, H3K27me2 and H3K27me3). The tri-methylated form is known to be critical in gene repression, and its proper placement is essential in defining repression patterns during development. EED is not a catalytic subunit but is required for the complex regulation of histone H3 lysine methylation by EZH2. The protein is Polycomb protein EED of Chaetomium thermophilum (strain DSM 1495 / CBS 144.50 / IMI 039719) (Thermochaetoides thermophila).